A 449-amino-acid chain; its full sequence is CCA-adding enzyme (449 aa).

ATP-binding residues include Ser53 and Lys56. CTP-binding residues include Ser53 and Lys56. Mg(2+) contacts are provided by Asp65, Asp67, and Asp119. Residues His142, Lys161, and Tyr170 each coordinate ATP. Residues His142, Lys161, and Tyr170 each coordinate CTP.

Belongs to the tRNA nucleotidyltransferase/poly(A) polymerase family. Archaeal CCA-adding enzyme subfamily. As to quaternary structure, homodimer. Mg(2+) serves as cofactor.

The enzyme catalyses a tRNA precursor + 2 CTP + ATP = a tRNA with a 3' CCA end + 3 diphosphate. It catalyses the reaction a tRNA with a 3' CCA end + 2 CTP + ATP = a tRNA with a 3' CCACCA end + 3 diphosphate. Functionally, catalyzes the addition and repair of the essential 3'-terminal CCA sequence in tRNAs without using a nucleic acid template. Adds these three nucleotides in the order of C, C, and A to the tRNA nucleotide-73, using CTP and ATP as substrates and producing inorganic pyrophosphate. tRNA 3'-terminal CCA addition is required both for tRNA processing and repair. Also involved in tRNA surveillance by mediating tandem CCA addition to generate a CCACCA at the 3' terminus of unstable tRNAs. While stable tRNAs receive only 3'-terminal CCA, unstable tRNAs are marked with CCACCA and rapidly degraded. The polypeptide is CCA-adding enzyme (Pyrococcus horikoshii (strain ATCC 700860 / DSM 12428 / JCM 9974 / NBRC 100139 / OT-3)).